Here is a 481-residue protein sequence, read N- to C-terminus: Glutamyl-tRNA(Gln) amidotransferase subunit A (481 aa).

Active-site charge relay system residues include lysine 77 and serine 151. Serine 175 functions as the Acyl-ester intermediate in the catalytic mechanism.

The protein belongs to the amidase family. GatA subfamily. In terms of assembly, heterotrimer of A, B and C subunits.

It carries out the reaction L-glutamyl-tRNA(Gln) + L-glutamine + ATP + H2O = L-glutaminyl-tRNA(Gln) + L-glutamate + ADP + phosphate + H(+). Functionally, allows the formation of correctly charged Gln-tRNA(Gln) through the transamidation of misacylated Glu-tRNA(Gln) in organisms which lack glutaminyl-tRNA synthetase. The reaction takes place in the presence of glutamine and ATP through an activated gamma-phospho-Glu-tRNA(Gln). The sequence is that of Glutamyl-tRNA(Gln) amidotransferase subunit A from Rubrobacter xylanophilus (strain DSM 9941 / JCM 11954 / NBRC 16129 / PRD-1).